The chain runs to 204 residues: 3-isopropylmalate dehydratase small subunit (204 aa).

The protein belongs to the LeuD family. LeuD type 1 subfamily. In terms of assembly, heterodimer of LeuC and LeuD.

It catalyses the reaction (2R,3S)-3-isopropylmalate = (2S)-2-isopropylmalate. The protein operates within amino-acid biosynthesis; L-leucine biosynthesis; L-leucine from 3-methyl-2-oxobutanoate: step 2/4. Functionally, catalyzes the isomerization between 2-isopropylmalate and 3-isopropylmalate, via the formation of 2-isopropylmaleate. This chain is 3-isopropylmalate dehydratase small subunit, found in Roseiflexus castenholzii (strain DSM 13941 / HLO8).